Here is a 152-residue protein sequence, read N- to C-terminus: SsrA-binding protein (152 aa).

A disordered region spans residues 130 to 152 (HDKRQDLKQRQDKREMERAMKQR). The span at 132–152 (KRQDLKQRQDKREMERAMKQR) shows a compositional bias: basic and acidic residues.

This sequence belongs to the SmpB family.

Its subcellular location is the cytoplasm. Required for rescue of stalled ribosomes mediated by trans-translation. Binds to transfer-messenger RNA (tmRNA), required for stable association of tmRNA with ribosomes. tmRNA and SmpB together mimic tRNA shape, replacing the anticodon stem-loop with SmpB. tmRNA is encoded by the ssrA gene; the 2 termini fold to resemble tRNA(Ala) and it encodes a 'tag peptide', a short internal open reading frame. During trans-translation Ala-aminoacylated tmRNA acts like a tRNA, entering the A-site of stalled ribosomes, displacing the stalled mRNA. The ribosome then switches to translate the ORF on the tmRNA; the nascent peptide is terminated with the 'tag peptide' encoded by the tmRNA and targeted for degradation. The ribosome is freed to recommence translation, which seems to be the essential function of trans-translation. This Thermosynechococcus vestitus (strain NIES-2133 / IAM M-273 / BP-1) protein is SsrA-binding protein.